The sequence spans 73 residues: Beta-defensin 50 (73 aa).

The N-terminal stretch at 1-23 (MKTLCFLLLTSGLLYLMVKGVGS) is a signal peptide. Cystine bridges form between Cys34/Cys63 and Cys46/Cys64.

Belongs to the beta-defensin family. Highly expressed in prostate. Not expressed in uterus, epididymis, ovary, testis, spleen, submaxillary gland, thymus, thyroid, pancreas, smooth muscle, skeletal muscle, heart, kidney, lung, liver, eye and brain.

It localises to the secreted. Its function is as follows. Has bactericidal activity. This Mus musculus (Mouse) protein is Beta-defensin 50 (Defb50).